The chain runs to 200 residues: Molybdopterin synthase catalytic subunit (200 aa).

Residues 16–30 show a composition bias toward polar residues; it reads KLPSSHQSVEDSASE. The disordered stretch occupies residues 16–43; that stretch reads KLPSSHQSVEDSASEPSGYEAKDPPQDT. Position 20 is a phosphoserine (Ser-20). Substrate contacts are provided by residues 154 to 155, Lys-170, and 177 to 179; these read HR and KKE.

It belongs to the MoaE family. MOCS2B subfamily. In terms of assembly, heterotetramer; composed of 2 small (MOCS2A) and 2 large (MOCS2B) subunits.

It localises to the cytoplasm. Its subcellular location is the cytosol. The catalysed reaction is 2 [molybdopterin-synthase sulfur-carrier protein]-C-terminal-Gly-aminoethanethioate + cyclic pyranopterin phosphate + H2O = molybdopterin + 2 [molybdopterin-synthase sulfur-carrier protein]-C-terminal Gly-Gly + 2 H(+). It participates in cofactor biosynthesis; molybdopterin biosynthesis. Its function is as follows. Catalytic subunit of the molybdopterin synthase complex, a complex that catalyzes the conversion of precursor Z into molybdopterin. Acts by mediating the incorporation of 2 sulfur atoms from thiocarboxylated MOCS2A into precursor Z to generate a dithiolene group. This chain is Molybdopterin synthase catalytic subunit, found in Rattus norvegicus (Rat).